Here is a 68-residue protein sequence, read N- to C-terminus: MIRMGFFLTLTVAVLLTSLICTEAVPTDKRGMERLFDQVLLKDQRNCPYCVVYCCPPAYCQASGCRPP.

Positions 1–24 are cleaved as a signal peptide; it reads MIRMGFFLTLTVAVLLTSLICTEA. Residues 25 to 45 constitute a propeptide that is removed on maturation; the sequence is VPTDKRGMERLFDQVLLKDQR. 3 disulfides stabilise this stretch: C47–C55, C50–C60, and C54–C65.

It belongs to the conotoxin U superfamily. As to expression, expressed by the venom duct.

It localises to the secreted. In Conus victoriae (Queen Victoria cone), this protein is Conotoxin Vc7.3.